Here is a 552-residue protein sequence, read N- to C-terminus: Non-structural protein NS1 (552 aa).

This chain is Non-structural protein NS1 (Segment-5), found in Bluetongue virus 1 (isolate South Africa) (BTV 1).